Reading from the N-terminus, the 70-residue chain is MKILYLLFAFLFLAFLSEPGNAYKRCHKKGGHCFPKTVICLPPSSDFGKMDCRWKWKCCKKGSVNNAISI.

Positions 1–22 (MKILYLLFAFLFLAFLSEPGNA) are cleaved as a signal peptide. 3 disulfides stabilise this stretch: C26-C58, C33-C52, and C40-C59.

This sequence belongs to the crotamine-myotoxin family. In terms of assembly, monomer. Expressed by the venom gland.

The protein resides in the secreted. Functionally, cationic peptide that possesses multiple functions. It acts as a cell-penetrating peptide (CPP), and as a potent voltage-gated potassium channel (Kv) inhibitor. It exhibits antimicrobial activities, hind limb paralysis, and severe muscle necrosis by a non-enzymatic mechanism. The sequence is that of Myotoxin from Crotalus helleri (Southern pacific rattlesnake).